Here is a 548-residue protein sequence, read N- to C-terminus: MAAPISTNNVCSDDARPVTYHPNVWSDYFLRYTSELTEISVAKKEEHERQKEAIRNLLLQTRDDSTLKLELVDAIQRLGIGYHFEEEIHNSLRNIYDTNPIYNAEDDNLRVAALRFRLIRQQGFPAPCDVFRKFVDEEGEFKSWVSNDVEGLLNLYEASNFAVHGEEILEKALEFCSLRLEFLTQGMTNSLSMRVKEALKIPISKTLTRLGARKFMSMYQEDESHNETLLNFAKLDFNLVQKIHQKELNQITRWWKELDFGKNLPFARDRPVECYFWIVGVYFEPRYGIARTLLTKIIYLASVLDDIYDVYGTLAELTIFTQIIRRWDSDAMDQLPPYMRIYCKALFDVYVEMEEEMGKIRKSYAVEYAKKEMKRLAEMYFQEAQWAFSKYKPTMKEYLKVALISSGYMMMTINSLTTIEDLITEEEFNWILSEPRILRASLTITRLMDDLAGYGTEGKMSAVHYYMAENGVSEGEAFKEVSGIIKSAWKDVNAECVEPRAASTTILRCVVDFTRVIVLLYSDEDAYGNSQTKTKDLIKSVLVDPLII.

The (2E,6E)-farnesyl diphosphate site is built by arginine 268, aspartate 305, aspartate 309, arginine 446, and aspartate 449. Positions 305 and 309 each coordinate Mg(2+). A DDXXD motif motif is present at residues 305–309; that stretch reads DDIYD. The Mg(2+) site is built by aspartate 449 and glutamate 457.

It belongs to the terpene synthase family. Requires Mg(2+) as cofactor.

It carries out the reaction (2E,6E)-farnesyl diphosphate = (-)-(E)-beta-caryophyllene + diphosphate. Its pathway is secondary metabolite biosynthesis; terpenoid biosynthesis. Functionally, sesquiterpene synthase that catalyzes the formation of sesquiterpenes and sesquiterpenoid alcohols. Converts farnesyl diphosphate (FPP) to beta-caryophyllene. Can use geranyl diphosphate (GPP) to produce myrcene, limonene and camphene. This is Beta-caryophyllene synthase from Lavandula angustifolia (Lavender).